The chain runs to 488 residues: UDP-N-acetylmuramate--L-alanine ligase (488 aa).

127–133 (GTHGKTT) contributes to the ATP binding site.

The protein belongs to the MurCDEF family.

The protein resides in the cytoplasm. It catalyses the reaction UDP-N-acetyl-alpha-D-muramate + L-alanine + ATP = UDP-N-acetyl-alpha-D-muramoyl-L-alanine + ADP + phosphate + H(+). Its pathway is cell wall biogenesis; peptidoglycan biosynthesis. Its function is as follows. Cell wall formation. The polypeptide is UDP-N-acetylmuramate--L-alanine ligase (Shewanella baltica (strain OS223)).